Reading from the N-terminus, the 623-residue chain is Chaperone protein DnaK (623 aa).

Residue threonine 197 is modified to Phosphothreonine; by autocatalysis. The span at 595-615 (AENMYKKDEPNTANDKKKKDD) shows a compositional bias: basic and acidic residues. Residues 595-623 (AENMYKKDEPNTANDKKKKDDDVIDAEVE) are disordered.

The protein belongs to the heat shock protein 70 family.

Its function is as follows. Acts as a chaperone. This is Chaperone protein DnaK from Campylobacter jejuni subsp. doylei (strain ATCC BAA-1458 / RM4099 / 269.97).